Consider the following 297-residue polypeptide: Probable GTP 3',8-cyclase (297 aa).

The region spanning 4-220 is the Radical SAM core domain; the sequence is EFGREIRSFR…VVTRKFMQNR (217 aa). Arginine 13 lines the GTP pocket. [4Fe-4S] cluster contacts are provided by cysteine 20 and cysteine 24. S-adenosyl-L-methionine is bound at residue tyrosine 26. Residue cysteine 27 coordinates [4Fe-4S] cluster. Residue lysine 61 participates in GTP binding. Glycine 65 contributes to the S-adenosyl-L-methionine binding site. Threonine 91 contacts GTP. Serine 115 is a binding site for S-adenosyl-L-methionine. Lysine 151 lines the GTP pocket. Residues cysteine 242 and cysteine 245 each coordinate [4Fe-4S] cluster. Position 247–249 (247–249) interacts with GTP; the sequence is RIR. Cysteine 259 serves as a coordination point for [4Fe-4S] cluster.

It belongs to the radical SAM superfamily. MoaA family. [4Fe-4S] cluster serves as cofactor.

It catalyses the reaction GTP + AH2 + S-adenosyl-L-methionine = (8S)-3',8-cyclo-7,8-dihydroguanosine 5'-triphosphate + 5'-deoxyadenosine + L-methionine + A + H(+). It functions in the pathway cofactor biosynthesis; molybdopterin biosynthesis. Its function is as follows. Catalyzes the cyclization of GTP to (8S)-3',8-cyclo-7,8-dihydroguanosine 5'-triphosphate. In Methanococcus vannielii (strain ATCC 35089 / DSM 1224 / JCM 13029 / OCM 148 / SB), this protein is Probable GTP 3',8-cyclase.